The sequence spans 84 residues: Glutaredoxin (84 aa).

A Glutaredoxin domain is found at 1–84; that stretch reads MPPVVIYTTA…AGKLDALLSA (84 aa). A disulfide bond links Cys-12 and Cys-15.

The protein belongs to the glutaredoxin family. In terms of assembly, monomer.

It localises to the cytoplasm. Functionally, has a glutathione-disulfide oxidoreductase activity in the presence of NADPH and glutathione reductase. Reduces low molecular weight disulfides and proteins. The polypeptide is Glutaredoxin (grx) (Pseudomonas aeruginosa (strain ATCC 15692 / DSM 22644 / CIP 104116 / JCM 14847 / LMG 12228 / 1C / PRS 101 / PAO1)).